Reading from the N-terminus, the 680-residue chain is MIDRYKHQQLRIGLVSPQQISAWATKKIPNGEIVGEVTKPYTFHYKTNKPEKDGLFCERIFGPIKSGICACGNYRVIGDEKEDPKFCEQCGVEFVDSRIRRYQMGYIKLTCPVTHVWYLKRLPSYIANLLDKPLKELEGLVYCDFSFARPITKKPTFLRLRGSFEYEIQSWKYSIPLFFTTQGFDIFRNREISTGAGAIREQLADLDLRIIIENSLVEWKQLGEEGPTGNEWEDRKIVRRKDFLVRRMELAKHFIRTNIEPEWMVLCLLPVLPPELRPIIQVEGGKLMSSDINELYRRVIYRNNTLTDLLTTSRSTPGELVMCQEKLVQEAVDTLLDNGIRGQPMRDGHNKVYKSFSDVIEGKEGRFRETLLGKRVDYSGRSVIVVGPSLSLHRCGLPREIAIELFQTFVIRGLIRQHLASNIGVAKSQIREKKPIVWEILQEVMQGHPVLLNRAPTLHRLGIQSFQPILVEGRTICLHPLVCKGFNADFDGDQMAVHVPLSLEAQAEARLLMFSHMNLLSPAIGDPISVPTQDMLIGLYVLTSGTRRGICANRYNPCNRKNYKNERIYETNYKYMKEPFFCNSYDAIGAYRQKRINLDSPLWLRWQLDQRVIASREVPIEVHYESFGNYHEIYAHYLIVRSVKKETFCIYIRTTAGHISFYREIEEAIQGFSQACSYDT.

The Zn(2+) site is built by C69, C71, C87, and C90. Residues D489, D491, and D493 each contribute to the Mg(2+) site.

It belongs to the RNA polymerase beta' chain family. RpoC1 subfamily. As to quaternary structure, in plastids the minimal PEP RNA polymerase catalytic core is composed of four subunits: alpha, beta, beta', and beta''. When a (nuclear-encoded) sigma factor is associated with the core the holoenzyme is formed, which can initiate transcription. It depends on Mg(2+) as a cofactor. Zn(2+) serves as cofactor.

Its subcellular location is the plastid. The protein localises to the chloroplast. It catalyses the reaction RNA(n) + a ribonucleoside 5'-triphosphate = RNA(n+1) + diphosphate. In terms of biological role, DNA-dependent RNA polymerase catalyzes the transcription of DNA into RNA using the four ribonucleoside triphosphates as substrates. This chain is DNA-directed RNA polymerase subunit beta', found in Lobularia maritima (Sweet alyssum).